Reading from the N-terminus, the 435-residue chain is Matrix remodeling-associated protein 8 (435 aa).

Positions 1–22 (MEIRCKVLVCHIILLHSATVYL) are cleaved as a signal peptide. The Extracellular segment spans residues 23 to 337 (YSVPASQQNP…QESRLHFFQQ (315 aa)). 2 Ig-like V-type domains span residues 32–158 (PESV…LNIT) and 156–293 (NITK…LSVS). Residues Asn41, Asn120, Asn156, Asn245, and Asn324 are each glycosylated (N-linked (GlcNAc...) asparagine). Residues Cys54 and Cys138 are joined by a disulfide bond. Residues Cys187 and Cys273 are joined by a disulfide bond. Residues 338 to 358 (LGYILATLLLFILLLTAVILI) form a helical membrane-spanning segment. Residues 359–435 (TRKHQKRGYA…DLELRKEYCK (77 aa)) are Cytoplasmic-facing.

As to quaternary structure, homodimer in cis. Does not appear to form trans-homodimers.

The protein localises to the cell membrane. Its function is as follows. Transmembrane protein which can modulate activity of various signaling pathways, probably via binding to integrin ITGAV:ITGB3. Mediates heterophilic cell-cell interactions in vitro. This chain is Matrix remodeling-associated protein 8 (mxra8), found in Xenopus laevis (African clawed frog).